Reading from the N-terminus, the 1110-residue chain is Envelopment polyprotein (1110 aa).

Residues 1-8 constitute a propeptide that is removed on maturation; sequence MALKETDA. Residues 1-290 are Lumenal-facing; sequence MALKETDAKI…KYSKNIYKQT (290 aa). The short motif at 14 to 16 is the Cell attachment site element; it reads RGD. N-linked (GlcNAc...) asparagine; by host glycosylation is found at Asn-46 and Asn-92. Disulfide bonds link Cys-90/Cys-121 and Cys-98/Cys-132. The segment at 153 to 171 is non-covalent dimerization; that stretch reads IDNKRKLSIGTKFYIIESL. Asn-186 is a glycosylation site (N-linked (GlcNAc...) asparagine; by host). Cys-200 and Cys-261 form a disulfide bridge. Residues 291-342 form a helical membrane-spanning segment; that stretch reads ACINFSWFRLIMIALIVYFPIRYLVNKTSKTLFYGYDLLGLITYPILLLINY. The Cytoplasmic segment spans residues 343–459; it reads LWSYFPLKCK…VPGCDRFVTN (117 aa). The Lumenal segment spans residues 460-1044; the sequence is RYDKCPEKDQ…HFGSFFDTVR (585 aa). N-linked (GlcNAc...) asparagine; by host glycans are attached at residues Asn-566, Asn-582, and Asn-957. A helical transmembrane segment spans residues 1045–1065; it reads VVLLILFVFALAYLCSIVATM. Residues 1066–1110 are Cytoplasmic-facing; sequence CRGYVRNKSYKTKYIEDTNDYSLVSTSSGKDTITRRRPPLDFSGI. Residues 1091–1110 form a disordered region; it reads TSSGKDTITRRRPPLDFSGI.

It belongs to the tospovirus envelope glycoprotein family. Homodimer; disulfide-linked. Heterodimer with Glycoprotein C. Interacts with nucleoprotein. As to quaternary structure, heterodimer with Glycoprotein N. Interacts with nucleoprotein. Post-translationally, specific enzymatic cleavages in vivo yield mature proteins including Glycoprotein N and Glycoprotein C. In terms of processing, glycosylated with O-linked glycans. Glycosylation is essential for proper subcellular location. Cleaved at acidic pH.

It localises to the virion membrane. Its subcellular location is the host Golgi apparatus membrane. The protein localises to the host endoplasmic reticulum membrane. Functionally, forms the spikes present at the surface of the virion together with Glycoprotein C. They are able to attach the virion to a cell receptor and to promote fusion of membranes after endocytosis of the virion. Plays a role in virus binding and/or entry into the vector midgut. In terms of biological role, forms the spikes present at the surface of the virion together with Glycoprotein N. They are able to attach the virion to a cell receptor and to promote fusion of membranes after endocytosis of the virion. Probable class II fusion protein. This is Envelopment polyprotein (GP) from Impatiens necrotic spot virus (INSV).